Here is a 376-residue protein sequence, read N- to C-terminus: MSKKRVAIIFGGQSSEHEVSRVSAQSVIENIDKQKYDVEIIGITKSGQWLKYDGPVEKIGNGDWEAIAQKKPVESLSQAGISSSGITTVNSVRQIMPGNVKAPIDVIFPVLHGCNGEDGTIQGLFELAGIPYVGCGVLGSAVGMDKAYTKIIFEKEGLPQGDYLVFNRKQVYNRIEDVVAQIEGRLTYPCFVKPSNAGSSVGVNKASDRESLVKALNIAAKNDRRILVEEFINGREIECAVLGNDNPVASTVGEVVPCNDFYDYEAKYQVGDSSKVVIPAPNLSKETVEKIREYAVRAFKCLDCAGLSRVDFFVHKETGEIYINEINTLPGFTQISMYPKLWAASGIPYSELINKLIELAFERYEDTRREYTNTLD.

The ATP-grasp domain occupies 150–358 (KIIFEKEGLP…YSELINKLIE (209 aa)). 183-238 (EGRLTYPCFVKPSNAGSSVGVNKASDRESLVKALNIAAKNDRRILVEEFINGREIE) is an ATP binding site. Residues Asp311, Glu325, and Asn327 each coordinate Mg(2+).

Belongs to the D-alanine--D-alanine ligase family. Mg(2+) serves as cofactor. The cofactor is Mn(2+).

The protein localises to the cytoplasm. It carries out the reaction 2 D-alanine + ATP = D-alanyl-D-alanine + ADP + phosphate + H(+). The protein operates within cell wall biogenesis; peptidoglycan biosynthesis. In terms of biological role, cell wall formation. This chain is D-alanine--D-alanine ligase, found in Ruminiclostridium cellulolyticum (strain ATCC 35319 / DSM 5812 / JCM 6584 / H10) (Clostridium cellulolyticum).